Consider the following 640-residue polypeptide: Threonine--tRNA ligase (640 aa).

The tract at residues 224-525 (DHRKLGKELD…LTEHYAGAFP (302 aa)) is catalytic. 3 residues coordinate Zn(2+): Cys-323, His-374, and His-502.

It belongs to the class-II aminoacyl-tRNA synthetase family. Homodimer. Zn(2+) serves as cofactor.

Its subcellular location is the cytoplasm. The catalysed reaction is tRNA(Thr) + L-threonine + ATP = L-threonyl-tRNA(Thr) + AMP + diphosphate + H(+). Its function is as follows. Catalyzes the attachment of threonine to tRNA(Thr) in a two-step reaction: L-threonine is first activated by ATP to form Thr-AMP and then transferred to the acceptor end of tRNA(Thr). Also edits incorrectly charged L-seryl-tRNA(Thr). The chain is Threonine--tRNA ligase from Tropheryma whipplei (strain Twist) (Whipple's bacillus).